Here is a 330-residue protein sequence, read N- to C-terminus: Cytoskeleton protein RodZ (330 aa).

Residues M1–G111 lie on the Cytoplasmic side of the membrane. The region spanning L19–L71 is the HTH cro/C1-type domain. A DNA-binding region (H-T-H motif) is located at residues Q30–D49. Residues W112–W132 traverse the membrane as a helical; Signal-anchor for type II membrane protein segment. At W133 to Q330 the chain is on the periplasmic side. A compositionally biased stretch (polar residues) spans M146 to L166. Residues M146–N237 form a disordered region. 2 stretches are compositionally biased toward low complexity: residues T176–D202 and T216–T233.

The protein belongs to the RodZ family.

It localises to the cell inner membrane. Cytoskeletal protein that is involved in cell-shape control through regulation of the length of the long axis. This is Cytoskeleton protein RodZ from Klebsiella pneumoniae (strain 342).